The sequence spans 288 residues: ATP synthase gamma chain (288 aa).

The protein belongs to the ATPase gamma chain family. In terms of assembly, F-type ATPases have 2 components, CF(1) - the catalytic core - and CF(0) - the membrane proton channel. CF(1) has five subunits: alpha(3), beta(3), gamma(1), delta(1), epsilon(1). CF(0) has three main subunits: a, b and c.

Its subcellular location is the cell inner membrane. Produces ATP from ADP in the presence of a proton gradient across the membrane. The gamma chain is believed to be important in regulating ATPase activity and the flow of protons through the CF(0) complex. The polypeptide is ATP synthase gamma chain (Aeromonas hydrophila subsp. hydrophila (strain ATCC 7966 / DSM 30187 / BCRC 13018 / CCUG 14551 / JCM 1027 / KCTC 2358 / NCIMB 9240 / NCTC 8049)).